Consider the following 345-residue polypeptide: Phosphoribosylformylglycinamidine cyclo-ligase (345 aa).

The protein belongs to the AIR synthase family.

It localises to the cytoplasm. The catalysed reaction is 2-formamido-N(1)-(5-O-phospho-beta-D-ribosyl)acetamidine + ATP = 5-amino-1-(5-phospho-beta-D-ribosyl)imidazole + ADP + phosphate + H(+). The protein operates within purine metabolism; IMP biosynthesis via de novo pathway; 5-amino-1-(5-phospho-D-ribosyl)imidazole from N(2)-formyl-N(1)-(5-phospho-D-ribosyl)glycinamide: step 2/2. The polypeptide is Phosphoribosylformylglycinamidine cyclo-ligase (Escherichia coli (strain 55989 / EAEC)).